A 190-amino-acid polypeptide reads, in one-letter code: Segregation and condensation protein B (190 aa).

This sequence belongs to the ScpB family. Homodimer. Homodimerization may be required to stabilize the binding of ScpA to the Smc head domains. Component of a cohesin-like complex composed of ScpA, ScpB and the Smc homodimer, in which ScpA and ScpB bind to the head domain of Smc. The presence of the three proteins is required for the association of the complex with DNA.

It localises to the cytoplasm. Its function is as follows. Participates in chromosomal partition during cell division. May act via the formation of a condensin-like complex containing Smc and ScpA that pull DNA away from mid-cell into both cell halves. The protein is Segregation and condensation protein B of Bacillus cereus (strain AH187).